A 517-amino-acid polypeptide reads, in one-letter code: Pentatricopeptide repeat-containing protein At5g42450, mitochondrial (517 aa).

A mitochondrion-targeting transit peptide spans 1 to 23; the sequence is MLHMILSQRVILLRKYHSSANAL. PPR repeat units lie at residues 57–91, 92–126, 127–157, 158–188, 189–223, 225–259, 261–291, 294–329, and 368–398; these read DVIS…GIRP, NEFT…GLAS, NVFV…TRDP, NVVS…MPER, SVVT…GVVI, NEST…LGKR, NVFV…LEEE, NIVS…NLRP, and ELEH…MPLD. The interval 403-478 is type E motif; sequence FWKALLGGCQ…FTGCSWIEVR (76 aa). A type E(+) motif region spans residues 479–509; that stretch reads DQIRVFVNADKNNELKDEVYRMLALVSQHLE.

The protein belongs to the PPR family. PCMP-E subfamily.

The protein localises to the mitochondrion. In Arabidopsis thaliana (Mouse-ear cress), this protein is Pentatricopeptide repeat-containing protein At5g42450, mitochondrial (PCMP-E102).